The primary structure comprises 359 residues: DNA polymerase IV (359 aa).

Residues 4 to 185 (IIHIDMDCYF…LPLSKIPGVG (182 aa)) enclose the UmuC domain. The Mg(2+) site is built by aspartate 8 and aspartate 103. Glutamate 104 is a catalytic residue.

It belongs to the DNA polymerase type-Y family. Monomer. The cofactor is Mg(2+).

The protein localises to the cytoplasm. It catalyses the reaction DNA(n) + a 2'-deoxyribonucleoside 5'-triphosphate = DNA(n+1) + diphosphate. In terms of biological role, poorly processive, error-prone DNA polymerase involved in untargeted mutagenesis. Copies undamaged DNA at stalled replication forks, which arise in vivo from mismatched or misaligned primer ends. These misaligned primers can be extended by PolIV. Exhibits no 3'-5' exonuclease (proofreading) activity. May be involved in translesional synthesis, in conjunction with the beta clamp from PolIII. The protein is DNA polymerase IV of Shewanella frigidimarina (strain NCIMB 400).